Here is a 220-residue protein sequence, read N- to C-terminus: UPF0319 protein Asuc_1002 (220 aa).

The N-terminal stretch at Met1 to Ala21 is a signal peptide.

This sequence belongs to the UPF0319 family.

In Actinobacillus succinogenes (strain ATCC 55618 / DSM 22257 / CCUG 43843 / 130Z), this protein is UPF0319 protein Asuc_1002.